A 150-amino-acid chain; its full sequence is MLGTALRRCAVAAASRAGPRGLQHPAPVPGPTAAIQSIRCYSHGSHETDEEFDARWVTYFNKPDIDAWELRKGMNTLVGYDLVPEPKIIDAALRACRRLNDFASAVRILEVVKDKAGPHKEIYPYVIQELRPTLNELGISTPEELGLDKV.

A mitochondrion-targeting transit peptide spans 1–41 (MLGTALRRCAVAAASRAGPRGLQHPAPVPGPTAAIQSIRCY). The SIFI-degron signature appears at 2–17 (LGTALRRCAVAAASRA). N6-acetyllysine occurs at positions 87 and 113. Phosphothreonine is present on T141.

Belongs to the cytochrome c oxidase subunit 5A family. Component of the cytochrome c oxidase (complex IV, CIV), a multisubunit enzyme composed of 14 subunits. The complex is composed of a catalytic core of 3 subunits MT-CO1, MT-CO2 and MT-CO3, encoded in the mitochondrial DNA, and 11 supernumerary subunits COX4I, COX5A, COX5B, COX6A, COX6B, COX6C, COX7A, COX7B, COX7C, COX8 and NDUFA4, which are encoded in the nuclear genome. The complex exists as a monomer or a dimer and forms supercomplexes (SCs) in the inner mitochondrial membrane with NADH-ubiquinone oxidoreductase (complex I, CI) and ubiquinol-cytochrome c oxidoreductase (cytochrome b-c1 complex, complex III, CIII), resulting in different assemblies (supercomplex SCI(1)III(2)IV(1) and megacomplex MCI(2)III(2)IV(2)). Interacts with AFG1L. Interacts with RAB5IF. Post-translationally, in response to mitochondrial stress, the precursor protein is ubiquitinated by the SIFI complex in the cytoplasm before mitochondrial import, leading to its degradation. Within the SIFI complex, UBR4 initiates ubiquitin chain that are further elongated or branched by KCMF1.

It is found in the mitochondrion inner membrane. Its pathway is energy metabolism; oxidative phosphorylation. Its function is as follows. Component of the cytochrome c oxidase, the last enzyme in the mitochondrial electron transport chain which drives oxidative phosphorylation. The respiratory chain contains 3 multisubunit complexes succinate dehydrogenase (complex II, CII), ubiquinol-cytochrome c oxidoreductase (cytochrome b-c1 complex, complex III, CIII) and cytochrome c oxidase (complex IV, CIV), that cooperate to transfer electrons derived from NADH and succinate to molecular oxygen, creating an electrochemical gradient over the inner membrane that drives transmembrane transport and the ATP synthase. Cytochrome c oxidase is the component of the respiratory chain that catalyzes the reduction of oxygen to water. Electrons originating from reduced cytochrome c in the intermembrane space (IMS) are transferred via the dinuclear copper A center (CU(A)) of subunit 2 and heme A of subunit 1 to the active site in subunit 1, a binuclear center (BNC) formed by heme A3 and copper B (CU(B)). The BNC reduces molecular oxygen to 2 water molecules using 4 electrons from cytochrome c in the IMS and 4 protons from the mitochondrial matrix. The protein is Cytochrome c oxidase subunit 5A, mitochondrial (COX5A) of Nycticebus coucang (Slow loris).